The primary structure comprises 447 residues: Asparagine--tRNA ligase (447 aa).

The protein belongs to the class-II aminoacyl-tRNA synthetase family. Homodimer.

The protein localises to the cytoplasm. The enzyme catalyses tRNA(Asn) + L-asparagine + ATP = L-asparaginyl-tRNA(Asn) + AMP + diphosphate + H(+). This is Asparagine--tRNA ligase from Lactococcus lactis subsp. cremoris (strain SK11).